We begin with the raw amino-acid sequence, 189 residues long: Elongation factor P (189 aa).

Belongs to the elongation factor P family.

Its subcellular location is the cytoplasm. It participates in protein biosynthesis; polypeptide chain elongation. Involved in peptide bond synthesis. Stimulates efficient translation and peptide-bond synthesis on native or reconstituted 70S ribosomes in vitro. Probably functions indirectly by altering the affinity of the ribosome for aminoacyl-tRNA, thus increasing their reactivity as acceptors for peptidyl transferase. The chain is Elongation factor P from Pseudomonas savastanoi pv. phaseolicola (strain 1448A / Race 6) (Pseudomonas syringae pv. phaseolicola (strain 1448A / Race 6)).